Here is a 1172-residue protein sequence, read N- to C-terminus: Serine/threonine-protein kinase Nek10 (1172 aa).

The stretch at 209–251 is one ARM repeat; sequence GAHKTLVNLLGARDTNVLLGSLLALASLAESQECREKISELNI. Residues 481-514 adopt a coiled-coil conformation; sequence YEELVSKLNLLVEDELKQIAENIESINQNKAPLK. Residues 519–712 enclose the Protein kinase domain; it reads YAILDHLGSG…SEPYGEKADV (194 aa). ATP is bound by residues 525 to 533 and lysine 548; that span reads LGSGAFGCV. Catalysis depends on aspartate 655, which acts as the Proton acceptor. Disordered regions lie at residues 855–875 and 898–954; these read SELS…YGKD and TYSE…GSRP. Polar residues predominate over residues 919-945; sequence PLKESTFNILKRSFSASGGERQSQTRD.

It belongs to the protein kinase superfamily. NEK Ser/Thr protein kinase family. NIMA subfamily. As to quaternary structure, interacts with RAF1 and MAP2K1; the interaction is direct with RAF1 and required for ERK1/2-signaling pathway activation in response to UV irradiation. It depends on Mg(2+) as a cofactor. Expressed in the lung.

The catalysed reaction is L-seryl-[protein] + ATP = O-phospho-L-seryl-[protein] + ADP + H(+). It catalyses the reaction L-threonyl-[protein] + ATP = O-phospho-L-threonyl-[protein] + ADP + H(+). Functionally, plays a role in the cellular response to UV irradiation. Mediates G2/M cell cycle arrest, MEK autoactivation and ERK1/2-signaling pathway activation in response to UV irradiation. In ciliated cells of airways, it is involved in the regulation of mucociliary transport. The polypeptide is Serine/threonine-protein kinase Nek10 (Homo sapiens (Human)).